The primary structure comprises 166 residues: MFIKGVILSSYGVNGYARVKSISNNFCDFINLKDNKVLLKKNNGFTIEVKVVDVNIKSNSLYLKFEGINTPESVKSLIGFELWVDDSLASSLKEGEYYLGKLIGYAIVNDNRRLGEVVSFFEYLNSVFLEVKVGIKFFFIPFLSIYIGDIDAREKTIELKVLDLLR.

The region spanning 94-165 (EGEYYLGKLI…TIELKVLDLL (72 aa)) is the PRC barrel domain.

It belongs to the RimM family. As to quaternary structure, binds ribosomal protein uS19.

Its subcellular location is the cytoplasm. In terms of biological role, an accessory protein needed during the final step in the assembly of 30S ribosomal subunit, possibly for assembly of the head region. Essential for efficient processing of 16S rRNA. May be needed both before and after RbfA during the maturation of 16S rRNA. It has affinity for free ribosomal 30S subunits but not for 70S ribosomes. The sequence is that of Ribosome maturation factor RimM from Borrelia garinii subsp. bavariensis (strain ATCC BAA-2496 / DSM 23469 / PBi) (Borreliella bavariensis).